Here is a 279-residue protein sequence, read N- to C-terminus: MSAPCHCKHAEELTDTFSSSSLSYTNGKLSVLSPELQAEFQDPNHPANLICELCRLFYDNNWVTGTGGGISIRDVDGPNPNLVYIAPSGVQKERIQPWEMFLVELPDERIIRTPNDIPKELTKSYKYKPSACTPLFISCYTMRDAGACIHTHSQHAVMMTLFLENEKEFSISHIEQIKALPKLKYNEETKKIEKIGSMEYYDKLVIPIIENTPHEEDLTDSLQEAIKNYPGASAVLVRRHGIYVWGETVWKAKVYNEAIDYLLELAVKMKLAGIPLVKE.

Substrate is bound at residue Cys132. His150 and His152 together coordinate Zn(2+). Glu175 serves as the catalytic Proton donor/acceptor. His240 is a Zn(2+) binding site.

The protein belongs to the aldolase class II family. MtnB subfamily. Zn(2+) is required as a cofactor.

It localises to the cytoplasm. It catalyses the reaction 5-(methylsulfanyl)-D-ribulose 1-phosphate = 5-methylsulfanyl-2,3-dioxopentyl phosphate + H2O. The protein operates within amino-acid biosynthesis; L-methionine biosynthesis via salvage pathway; L-methionine from S-methyl-5-thio-alpha-D-ribose 1-phosphate: step 2/6. Catalyzes the dehydration of methylthioribulose-1-phosphate (MTRu-1-P) into 2,3-diketo-5-methylthiopentyl-1-phosphate (DK-MTP-1-P). This chain is Methylthioribulose-1-phosphate dehydratase, found in Candida tropicalis (strain ATCC MYA-3404 / T1) (Yeast).